The following is a 495-amino-acid chain: N-succinylglutamate 5-semialdehyde dehydrogenase (495 aa).

An NAD(+)-binding site is contributed by 228–233 (GSYATG). Active-site residues include Glu251 and Cys285.

It belongs to the aldehyde dehydrogenase family. AstD subfamily.

It catalyses the reaction N-succinyl-L-glutamate 5-semialdehyde + NAD(+) + H2O = N-succinyl-L-glutamate + NADH + 2 H(+). It functions in the pathway amino-acid degradation; L-arginine degradation via AST pathway; L-glutamate and succinate from L-arginine: step 4/5. In terms of biological role, catalyzes the NAD-dependent reduction of succinylglutamate semialdehyde into succinylglutamate. This Legionella pneumophila (strain Paris) protein is N-succinylglutamate 5-semialdehyde dehydrogenase.